The sequence spans 113 residues: RING-box protein 2 (113 aa).

The interval 1-26 (MADVEDGEETCALASHSGSSGSKSGG) is disordered. Position 2 is an N-acetylalanine (alanine 2). At threonine 10 the chain carries Phosphothreonine; by CK2. Zn(2+) contacts are provided by cysteine 50, cysteine 53, cysteine 61, cysteine 64, cysteine 73, cysteine 80, histidine 82, histidine 85, cysteine 87, cysteine 88, cysteine 99, and cysteine 102. The RING-type zinc-finger motif lies at 61 to 103 (CLRCQAENKQEDCVVVWGECNHSFHNCCMSLWVKQNNRCPLCQ).

This sequence belongs to the RING-box family. As to quaternary structure, catalytic component of multiple cullin-5-RING E3 ubiquitin-protein ligase complexes (ECS complexes, also named CRL5 complexes) composed of CUL5, Elongin BC (ELOB and ELOC), RNF7/RBX2 and a variable SOCS box domain-containing protein as substrate-specific recognition component. Also interacts (with lower preference) with CUL1, CUL2, CUL3, CUL4A and CUL4B; additional evidence is however required to confirm this result in vivo. Interacts with UBE2F. Interacts with CSNK2B, the interaction is not affected by phosphorylation by CK2. May also interact with DCUN1D1, DCUN1D2, DCUN1D3, DCUN1D4 and DCUN1D5. In terms of assembly, (Microbial infection) Following infection by HIV-1 virus, component of a cullin-5-RING E3 ubiquitin-protein ligase complex (ECS complex) hijacked by the HIV-1 Vif protein. Phosphorylation at Thr-10 by CK2 promotes its degradation by the proteasome. In terms of tissue distribution, expressed in heart, liver, skeletal muscle and pancreas. At very low levels expressed in brain, placenta and lung.

It is found in the cytoplasm. The protein resides in the nucleus. The catalysed reaction is S-ubiquitinyl-[E2 ubiquitin-conjugating enzyme]-L-cysteine + [acceptor protein]-L-lysine = [E2 ubiquitin-conjugating enzyme]-L-cysteine + N(6)-ubiquitinyl-[acceptor protein]-L-lysine.. The enzyme catalyses S-[NEDD8-protein]-yl-[E2 NEDD8-conjugating enzyme]-L-cysteine + [cullin]-L-lysine = [E2 NEDD8-conjugating enzyme]-L-cysteine + N(6)-[NEDD8-protein]-yl-[cullin]-L-lysine.. The protein operates within protein modification; protein ubiquitination. It functions in the pathway protein modification; protein neddylation. Its function is as follows. Catalytic component of multiple cullin-5-RING E3 ubiquitin-protein ligase complexes (ECS complexes), which mediate the ubiquitination and subsequent proteasomal degradation of target proteins. It is thereby involved in various biological processes, such as cell cycle progression, signal transduction and transcription. The functional specificity of the E3 ubiquitin-protein ligase ECS complexes depend on the variable SOCS box-containing substrate recognition component. Within ECS complexes, RNF7/RBX2 recruits the E2 ubiquitination enzyme to the complex via its RING-type and brings it into close proximity to the substrate. Catalytic subunit of various SOCS-containing ECS complexes, such as the ECS(SOCS7) complex, that regulate reelin signaling by mediating ubiquitination and degradation of DAB1. The ECS(SOCS2) complex mediates the ubiquitination and subsequent proteasomal degradation of phosphorylated EPOR and GHR. Promotes ubiquitination and degradation of NF1, thereby regulating Ras protein signal transduction. As part of the ECS(ASB9) complex, catalyzes ubiquitination and degradation of CKB. The ECS(SPSB3) complex catalyzes ubiquitination of nuclear CGAS. As part of the ECS(RAB40C) complex, mediates ANKRD28 ubiquitination and degradation, thereby inhibiting protein phosphatase 6 (PP6) complex activity and focal adhesion assembly during cell migration. As part of some ECS complex, catalyzes 'Lys-11'-linked ubiquitination and degradation of BTRC. ECS complexes and ARIH2 collaborate in tandem to mediate ubiquitination of target proteins; ARIH2 mediating addition of the first ubiquitin on CRLs targets. Specifically catalyzes the neddylation of CUL5 via its interaction with UBE2F. Does not catalyze neddylation of other cullins (CUL1, CUL2, CUL3, CUL4A or CUL4B). May play a role in protecting cells from apoptosis induced by redox agents. In terms of biological role, inactive. Functionally, (Microbial infection) Following infection by HIV-1 virus, catalytic component of a cullin-5-RING E3 ubiquitin-protein ligase complex (ECS complex) hijacked by the HIV-1 Vif protein, which catalyzes ubiquitination and degradation of APOBEC3F and APOBEC3G. The polypeptide is RING-box protein 2 (Homo sapiens (Human)).